Reading from the N-terminus, the 474-residue chain is tRNA (adenine(58)-N(1))-methyltransferase catalytic subunit trm61 (474 aa).

The segment at 75-109 (DTGSRGRTQKMKRKADELDSSTQAEDKPSPQTPVA) is disordered. Residues 163–165 (SGS), glutamate 197, arginine 202, 225–226 (DV), and aspartate 250 each bind S-adenosyl-L-methionine. 2 disordered regions span residues 356 to 390 (LFRATQNQSDGDSTPAPKAENEAKGGQQESEVPVY) and 423 to 474 (DEKR…SQKE). Residues 358–367 (RATQNQSDGD) are compositionally biased toward polar residues. Residues 423 to 432 (DEKRCREKWP) show a composition bias toward basic and acidic residues. Over residues 434–443 (NRVQEPQGPQ) the composition is skewed to polar residues. Residues 450–474 (KRESREKRDLQRKEQSQPETESQKE) are compositionally biased toward basic and acidic residues.

Belongs to the class I-like SAM-binding methyltransferase superfamily. TRM61 family. As to quaternary structure, heterotetramer; composed of two copies of TRM6 and two copies of TRM61.

The protein localises to the nucleus. It catalyses the reaction adenosine(58) in tRNA + S-adenosyl-L-methionine = N(1)-methyladenosine(58) in tRNA + S-adenosyl-L-homocysteine + H(+). In terms of biological role, catalytic subunit of tRNA (adenine-N(1)-)-methyltransferase, which catalyzes the formation of N(1)-methyladenine at position 58 (m1A58) in initiator methionyl-tRNA. This Aspergillus oryzae (strain ATCC 42149 / RIB 40) (Yellow koji mold) protein is tRNA (adenine(58)-N(1))-methyltransferase catalytic subunit trm61 (trm61).